Consider the following 249-residue polypeptide: Octanoyltransferase (249 aa).

A disordered region spans residues 1-23; it reads MVNSPQNPRQDQRQDLDLTSFSA. The BPL/LPL catalytic domain maps to 57-241; it reads GEAPELVWLL…AFEELFGPTR (185 aa). Substrate is bound by residues 95–102, 170–172, and 183–185; these read RGGQLTYH, AIG, and GIA. Catalysis depends on Cys-201, which acts as the Acyl-thioester intermediate.

It belongs to the LipB family.

It is found in the cytoplasm. The catalysed reaction is octanoyl-[ACP] + L-lysyl-[protein] = N(6)-octanoyl-L-lysyl-[protein] + holo-[ACP] + H(+). Its pathway is protein modification; protein lipoylation via endogenous pathway; protein N(6)-(lipoyl)lysine from octanoyl-[acyl-carrier-protein]: step 1/2. Functionally, catalyzes the transfer of endogenously produced octanoic acid from octanoyl-acyl-carrier-protein onto the lipoyl domains of lipoate-dependent enzymes. Lipoyl-ACP can also act as a substrate although octanoyl-ACP is likely to be the physiological substrate. This Bradyrhizobium diazoefficiens (strain JCM 10833 / BCRC 13528 / IAM 13628 / NBRC 14792 / USDA 110) protein is Octanoyltransferase.